Consider the following 317-residue polypeptide: MLMPLSFSLQTKEELARVKARHPCCRQAELVAFLRLGNLDGGQPGEETVLFTTPYPALARKVYSLAREFLACPVKVRNSRRQGKGRPVFRVVARARLKEIQDWLAGRAGVPEYPCCQAAYMRGAFLVTGSVNKPSGTHHLELIFPDAAMAGQMQGLMQQQELEPRLSRRQRGYVLYLKDSEQIIRALSLMGAYSAVLAYENVLIFKDMRNRVNRLVNCETANLTKTVETGLRQAENIRYLIATVGWDYLPPALREIAAVRLQHPEASLKELGEMLHPPVGKSGVNHRLRRLELIARQVRGQGREGYAPDDDLSRPRA.

The H-T-H motif DNA-binding region spans 267–300 (SLKELGEMLHPPVGKSGVNHRLRRLELIARQVRG).

Belongs to the WhiA family.

Functionally, involved in cell division and chromosome segregation. This is Probable cell division protein WhiA from Moorella thermoacetica (strain ATCC 39073 / JCM 9320).